The following is a 124-amino-acid chain: Class I hydrophobin 1 (124 aa).

Positions 1–18 (MRFSIATVVLSLAAMVVA) are cleaved as a signal peptide. Cystine bridges form between Cys35/Cys85, Cys43/Cys79, Cys44/Cys63, and Cys86/Cys97.

The protein belongs to the fungal hydrophobin family.

It is found in the secreted. It localises to the cell wall. Aerial growth, conidiation, and dispersal of filamentous fungi in the environment rely upon a capability of their secreting small amphipathic proteins called hydrophobins (HPBs) with low sequence identity. Class I can self-assemble into an outermost layer of rodlet bundles on aerial cell surfaces, conferring cellular hydrophobicity that supports fungal growth, development and dispersal; whereas Class II form highly ordered films at water-air interfaces through intermolecular interactions but contribute nothing to the rodlet structure. In Botryotinia fuckeliana, hydrophobins are not involved in conferring surface hydrophobicity to conidia and aerial hyphae and their function in sclerotia and fruiting bodies remains to be investigated. This Botryotinia fuckeliana (strain B05.10) (Noble rot fungus) protein is Class I hydrophobin 1 (Bhp1).